The primary structure comprises 1132 residues: Tyrosine-protein kinase JAK2 (1132 aa).

The interaction with cytokine/interferon/growth hormone receptors stretch occupies residues 1–239; it reads MGMACLTMTE…RYRFRRFIQQ (239 aa). An FERM domain is found at 37–380; sequence PVLQVYLYHS…GYYRLTADAH (344 aa). The residue at position 119 (Y119) is a Phosphotyrosine; by autocatalysis. Residues Y372 and Y373 each carry the phosphotyrosine modification. The SH2; atypical domain occupies 401 to 482; that stretch reads HGPISMDFAI…SLKDLLNCYQ (82 aa). The residue at position 523 (S523) is a Phosphoserine. The region spanning 545–809 is the Protein kinase 1 domain; that stretch reads LIFNESLGQG…AVIRDLNSLF (265 aa). 2 positions are modified to phosphotyrosine: Y570 and Y813. Positions 849-1126 constitute a Protein kinase 2 domain; sequence LKFLQQLGKG…RDLSLRVDQI (278 aa). 855–863 lines the ATP pocket; the sequence is LGKGNFGSV. Y868 carries the phosphotyrosine; by autocatalysis modification. K882 is a binding site for ATP. Phosphotyrosine; by autocatalysis is present on residues Y966 and Y972. Residue D976 is the Proton acceptor of the active site. Phosphotyrosine; by autocatalysis is present on residues Y1007 and Y1008.

Belongs to the protein kinase superfamily. Tyr protein kinase family. JAK subfamily. Interacts with IL23R, SKB1 and STAM2. Interacts with EPOR. Interacts with LYN. Interacts with SIRPA. Interacts with SH2B1. Interacts with TEC. Interacts with IFNGR2 (via intracellular domain). Interacts with LEPR (Isoform B). Interacts with HSP90AB1; promotes functional activation in a heat shock-dependent manner. Interacts with STRA6. Interacts with ASB2; the interaction targets JAK2 for Notch-induced proteasomal degradation. The cofactor is Mg(2+). In terms of processing, autophosphorylated, leading to regulate its activity. Leptin promotes phosphorylation on tyrosine residues, including phosphorylation on Tyr-813. Autophosphorylation on Tyr-119 in response to EPO down-regulates its kinase activity. Autophosphorylation on Tyr-868, Tyr-966 and Tyr-972 in response to growth hormone (GH) are required for maximal kinase activity. Also phosphorylated by TEC. Phosphorylated on tyrosine residues in response to interferon gamma signaling. Phosphorylated on tyrosine residues in response to a signaling cascade that is activated by increased cellular retinol. Post-translationally, undergoes Notch-induced ubiquitination and subsequent proteasomal degradation which is mediated by ASB1 or ASB2, the substrate-recognition components of probable ECS E3 ubiquitin-protein ligase complexes. In terms of tissue distribution, ubiquitously expressed throughout most tissues.

The protein resides in the endomembrane system. It localises to the cytoplasm. It is found in the nucleus. It catalyses the reaction L-tyrosyl-[protein] + ATP = O-phospho-L-tyrosyl-[protein] + ADP + H(+). Its activity is regulated as follows. Regulated by autophosphorylation, can both activate or decrease activity. Heme regulates its activity by enhancing the phosphorylation on Tyr-1007 and Tyr-1008. Functionally, non-receptor tyrosine kinase involved in various processes such as cell growth, development, differentiation or histone modifications. Mediates essential signaling events in both innate and adaptive immunity. In the cytoplasm, plays a pivotal role in signal transduction via its association with type I receptors such as growth hormone (GHR), prolactin (PRLR), leptin (LEPR), erythropoietin (EPOR), thrombopoietin (THPO); or type II receptors including IFN-alpha, IFN-beta, IFN-gamma and multiple interleukins. Following ligand-binding to cell surface receptors, phosphorylates specific tyrosine residues on the cytoplasmic tails of the receptor, creating docking sites for STATs proteins. Subsequently, phosphorylates the STATs proteins once they are recruited to the receptor. Phosphorylated STATs then form homodimer or heterodimers and translocate to the nucleus to activate gene transcription. For example, cell stimulation with erythropoietin (EPO) during erythropoiesis leads to JAK2 autophosphorylation, activation, and its association with erythropoietin receptor (EPOR) that becomes phosphorylated in its cytoplasmic domain. Then, STAT5 (STAT5A or STAT5B) is recruited, phosphorylated and activated by JAK2. Once activated, dimerized STAT5 translocates into the nucleus and promotes the transcription of several essential genes involved in the modulation of erythropoiesis. Part of a signaling cascade that is activated by increased cellular retinol and that leads to the activation of STAT5 (STAT5A or STAT5B). In addition, JAK2 mediates angiotensin-2-induced ARHGEF1 phosphorylation. Plays a role in cell cycle by phosphorylating CDKN1B. Cooperates with TEC through reciprocal phosphorylation to mediate cytokine-driven activation of FOS transcription. In the nucleus, plays a key role in chromatin by specifically mediating phosphorylation of 'Tyr-41' of histone H3 (H3Y41ph), a specific tag that promotes exclusion of CBX5 (HP1 alpha) from chromatin. Up-regulates the potassium voltage-gated channel activity of KCNA3. This chain is Tyrosine-protein kinase JAK2, found in Rattus norvegicus (Rat).